The following is a 404-amino-acid chain: Formate-dependent phosphoribosylglycinamide formyltransferase (404 aa).

Residues 27–28 (EL) and E87 contribute to the N(1)-(5-phospho-beta-D-ribosyl)glycinamide site. Residues R120, K162, 167 to 172 (SSGKGQ), 202 to 205 (EGFI), and E210 each bind ATP. One can recognise an ATP-grasp domain in the interval 125-320 (RLAAETLGLP…EFELHARALL (196 aa)). The Mg(2+) site is built by E279 and E291. N(1)-(5-phospho-beta-D-ribosyl)glycinamide-binding positions include D298, K367, and 374–375 (RR).

This sequence belongs to the PurK/PurT family. As to quaternary structure, homodimer.

The enzyme catalyses N(1)-(5-phospho-beta-D-ribosyl)glycinamide + formate + ATP = N(2)-formyl-N(1)-(5-phospho-beta-D-ribosyl)glycinamide + ADP + phosphate + H(+). It functions in the pathway purine metabolism; IMP biosynthesis via de novo pathway; N(2)-formyl-N(1)-(5-phospho-D-ribosyl)glycinamide from N(1)-(5-phospho-D-ribosyl)glycinamide (formate route): step 1/1. Its function is as follows. Involved in the de novo purine biosynthesis. Catalyzes the transfer of formate to 5-phospho-ribosyl-glycinamide (GAR), producing 5-phospho-ribosyl-N-formylglycinamide (FGAR). Formate is provided by PurU via hydrolysis of 10-formyl-tetrahydrofolate. The chain is Formate-dependent phosphoribosylglycinamide formyltransferase from Bordetella pertussis (strain Tohama I / ATCC BAA-589 / NCTC 13251).